The following is a 245-amino-acid chain: 1-(5-phosphoribosyl)-5-[(5-phosphoribosylamino)methylideneamino] imidazole-4-carboxamide isomerase (245 aa).

The active-site Proton acceptor is the aspartate 7. Residue aspartate 129 is the Proton donor of the active site.

It belongs to the HisA/HisF family.

It localises to the cytoplasm. The enzyme catalyses 1-(5-phospho-beta-D-ribosyl)-5-[(5-phospho-beta-D-ribosylamino)methylideneamino]imidazole-4-carboxamide = 5-[(5-phospho-1-deoxy-D-ribulos-1-ylimino)methylamino]-1-(5-phospho-beta-D-ribosyl)imidazole-4-carboxamide. The protein operates within amino-acid biosynthesis; L-histidine biosynthesis; L-histidine from 5-phospho-alpha-D-ribose 1-diphosphate: step 4/9. The chain is 1-(5-phosphoribosyl)-5-[(5-phosphoribosylamino)methylideneamino] imidazole-4-carboxamide isomerase from Escherichia coli O81 (strain ED1a).